We begin with the raw amino-acid sequence, 148 residues long: Wheatwin-2 (148 aa).

A signal peptide spans 1-23 (MTMAARLMLVAALLCAAAAAATA). Glutamine 24 carries the post-translational modification Pyrrolidone carboxylic acid. The Barwin domain occupies 24–148 (QQATNVRATY…VNYQFVDCRD (125 aa)). 3 cysteine pairs are disulfide-bonded: cysteine 54-cysteine 86, cysteine 75-cysteine 109, and cysteine 89-cysteine 146.

Monomer.

In terms of biological role, shows antifungal activity towards B.cinerea and towards the wheat-specific pathogenic fungi F.culmorum and F.graminearum (groups 1 and 2). The protein is Wheatwin-2 (PR4B) of Triticum aestivum (Wheat).